The following is a 478-amino-acid chain: Shikimate biosynthesis protein AroDE (478 aa).

Residues Met1 to Thr208 form a 3-dehydroquinate dehydratase region. Residues Ser21, Glu29–Arg31, and Thr55–Lys57 each bind 3-dehydroquinate. Residue His110 is the Proton donor/acceptor; for 3-dehydroquinate dehydratase activity of the active site. Lys133 serves as the catalytic Schiff-base intermediate with substrate; for 3-dehydroquinate dehydratase activity. 3-dehydroquinate-binding residues include Arg171 and Gln196. A shikimate 5-dehydrogenase region spans residues Asn209–Ala478. Ser226–Gly228 contacts shikimate. The active-site Proton acceptor; for shikimate dehydrogenase activity is the Lys277. 2 residues coordinate shikimate: Asn298 and Asp313. NADP(+)-binding positions include Gly337 to Ala341, Asn360 to Thr362, and Gly435. Residue Gln442 coordinates shikimate.

In the N-terminal section; belongs to the type-I 3-dehydroquinase family. The protein in the C-terminal section; belongs to the shikimate dehydrogenase family.

The enzyme catalyses 3-dehydroquinate = 3-dehydroshikimate + H2O. The catalysed reaction is shikimate + NADP(+) = 3-dehydroshikimate + NADPH + H(+). It participates in metabolic intermediate biosynthesis; chorismate biosynthesis; chorismate from D-erythrose 4-phosphate and phosphoenolpyruvate: step 3/7. It functions in the pathway metabolic intermediate biosynthesis; chorismate biosynthesis; chorismate from D-erythrose 4-phosphate and phosphoenolpyruvate: step 4/7. Bifunctional enzyme that catalyzes two sequential steps of the aromatic amino acids biosynthetic pathway. In the first reaction, the AroD domain catalyzes the cis-dehydration of 3-dehydroquinate (DHQ) and introduces the first double bond of the aromatic ring to yield 3-dehydroshikimate; in the second reaction, the AroE domain catalyzes the reversible NADPH linked reduction of 3-dehydroshikimate (DHSA) to yield shikimate (SA). The polypeptide is Shikimate biosynthesis protein AroDE (Chlamydia muridarum (strain MoPn / Nigg)).